Reading from the N-terminus, the 231-residue chain is Biosynthetic peptidoglycan transglycosylase (231 aa).

The helical transmembrane segment at 7–27 (LLFWLIVVPVLLVLLLQLYFF) threads the bilayer.

The protein belongs to the glycosyltransferase 51 family.

The protein resides in the cell inner membrane. The enzyme catalyses [GlcNAc-(1-&gt;4)-Mur2Ac(oyl-L-Ala-gamma-D-Glu-L-Lys-D-Ala-D-Ala)](n)-di-trans,octa-cis-undecaprenyl diphosphate + beta-D-GlcNAc-(1-&gt;4)-Mur2Ac(oyl-L-Ala-gamma-D-Glu-L-Lys-D-Ala-D-Ala)-di-trans,octa-cis-undecaprenyl diphosphate = [GlcNAc-(1-&gt;4)-Mur2Ac(oyl-L-Ala-gamma-D-Glu-L-Lys-D-Ala-D-Ala)](n+1)-di-trans,octa-cis-undecaprenyl diphosphate + di-trans,octa-cis-undecaprenyl diphosphate + H(+). The protein operates within cell wall biogenesis; peptidoglycan biosynthesis. Peptidoglycan polymerase that catalyzes glycan chain elongation from lipid-linked precursors. The sequence is that of Biosynthetic peptidoglycan transglycosylase from Janthinobacterium sp. (strain Marseille) (Minibacterium massiliensis).